A 543-amino-acid polypeptide reads, in one-letter code: Lipoyl synthase, apicoplast (543 aa).

Residues 1–63 (MAYFFDFPTD…LFSLLSASQS (63 aa)) form the signal peptide. Positions 252, 257, 263, 278, 282, 285, and 493 each coordinate [4Fe-4S] cluster. Positions 264–482 (WNGGTATLIL…QDIAEEMGFK (219 aa)) constitute a Radical SAM core domain.

It belongs to the radical SAM superfamily. Lipoyl synthase family. [4Fe-4S] cluster serves as cofactor.

The protein resides in the plastid. It localises to the apicoplast. The catalysed reaction is [[Fe-S] cluster scaffold protein carrying a second [4Fe-4S](2+) cluster] + N(6)-octanoyl-L-lysyl-[protein] + 2 oxidized [2Fe-2S]-[ferredoxin] + 2 S-adenosyl-L-methionine + 4 H(+) = [[Fe-S] cluster scaffold protein] + N(6)-[(R)-dihydrolipoyl]-L-lysyl-[protein] + 4 Fe(3+) + 2 hydrogen sulfide + 2 5'-deoxyadenosine + 2 L-methionine + 2 reduced [2Fe-2S]-[ferredoxin]. Its pathway is protein modification; protein lipoylation via endogenous pathway; protein N(6)-(lipoyl)lysine from octanoyl-[acyl-carrier-protein]: step 2/2. Catalyzes the radical-mediated insertion of two sulfur atoms into the C-6 and C-8 positions of the octanoyl moiety bound to the lipoyl domains of lipoate-dependent enzymes, thereby converting the octanoylated domains into lipoylated derivatives. The protein is Lipoyl synthase, apicoplast of Toxoplasma gondii.